A 257-amino-acid chain; its full sequence is Large ribosomal subunit protein uL2 (257 aa).

Residues 207–226 (VEHPFGGGNHQHIGKPSTIR) are disordered.

Belongs to the universal ribosomal protein uL2 family. As to quaternary structure, component of the large ribosomal subunit.

Its subcellular location is the cytoplasm. Functionally, component of the large ribosomal subunit. The ribosome is a large ribonucleoprotein complex responsible for the synthesis of proteins in the cell. This chain is Large ribosomal subunit protein uL2 (rpl8), found in Ictalurus punctatus (Channel catfish).